The chain runs to 365 residues: C-X-C chemokine receptor type 3 (365 aa).

At 1-57 the chain is on the extracellular side; it reads MVPEMSERQVFQASELTYLLENCSSSYDYAENESDSCCASPPCPQDISLNFDRAFLP. N-linked (GlcNAc...) asparagine glycosylation is present at N22. Y27 and Y29 each carry sulfotyrosine. N-linked (GlcNAc...) asparagine glycosylation occurs at N32. Residues 58–78 form a helical membrane-spanning segment; the sequence is ALYGLLFLLGLLGNGAVAAVL. Over 79-88 the chain is Cytoplasmic; sequence CSQRAARTST. Residues 89 to 109 traverse the membrane as a helical segment; it reads DTFLLHLAVADMLLVLTLPLW. Topologically, residues 110-126 are extracellular; the sequence is RVDTAVQWVFGSGLCKV. An intrachain disulfide couples C124 to C203. Residues 127-147 form a helical membrane-spanning segment; it reads AGALFNINFYAGALLLACISF. Residues 148 to 169 lie on the Cytoplasmic side of the membrane; sequence DRYLSIVHATQPYRRGPPARVT. Residues 170 to 190 form a helical membrane-spanning segment; that stretch reads LTCVVVWGLCLFFAIPDFIFL. Over 191-223 the chain is Extracellular; it reads SANRDERLNAMHCRYNFPQVGRTALRGLQLVAG. The chain crosses the membrane as a helical span at residues 224-244; sequence FLLPLLVMAYCYARILAVLLV. Topologically, residues 245-256 are cytoplasmic; sequence SRGQRRQRRMRL. A helical transmembrane segment spans residues 257 to 277; that stretch reads VVVVVVAFALCWTPYHLVVLV. The Extracellular portion of the chain corresponds to 278–301; sequence DTLMDLGALDRNCGRESRVDVAKS. Residues 302-322 form a helical membrane-spanning segment; it reads VTSGLGYMHCCLNPLLYAFVG. Topologically, residues 323 to 365 are cytoplasmic; it reads VKFRERMWMLLLRLGCPDHRGHQRHPTLSRRESSWSETPSTPR. The tract at residues 342-365 is disordered; the sequence is RGHQRHPTLSRRESSWSETPSTPR.

The protein belongs to the G-protein coupled receptor 1 family. Homomer. Forms heteromers with ACKR4. Interacts with PF4/CXCL4. In terms of processing, sulfation on Tyr-27 and Tyr-29 is essential for CXCL10 binding. Post-translationally, N-glycosylated.

The protein localises to the cell membrane. In terms of biological role, receptor for the C-X-C chemokine CXCL9, CXCL10 and CXCL11 and mediates the proliferation, survival and angiogenic activity of mesangial cells through a heterotrimeric G-protein signaling pathway. Probably promotes cell chemotaxis response. Binds to CCL21. Upon activation by PF4, induces activated T-lymphocytes migration mediated via downstream Ras/extracellular signal-regulated kinase (ERK) signaling. The polypeptide is C-X-C chemokine receptor type 3 (CXCR3) (Canis lupus familiaris (Dog)).